The primary structure comprises 550 residues: Tyrosine-protein phosphatase 1 (550 aa).

The region spanning 260-539 (LYQKFLRLQS…KYVYDLIDSL (280 aa)) is the Tyrosine-protein phosphatase domain. A phosphoserine mark is found at Ser318 and Ser320. Cys470 functions as the Phosphocysteine intermediate in the catalytic mechanism.

This sequence belongs to the protein-tyrosine phosphatase family. Non-receptor class subfamily.

The protein localises to the cytoplasm. The catalysed reaction is O-phospho-L-tyrosyl-[protein] + H2O = L-tyrosyl-[protein] + phosphate. Plays a role in inhibiting the onset of mitosis. Dephosphorylates sty1/spc1 and wis1/spc2/sty2. This is Tyrosine-protein phosphatase 1 (pyp1) from Schizosaccharomyces pombe (strain 972 / ATCC 24843) (Fission yeast).